The sequence spans 224 residues: EF-hand calcium-binding domain-containing protein 1 (224 aa).

The first 21 residues, 1–21 (MKVSLLLLALVLVCLVQGSES), serve as a signal peptide directing secretion. Residues 115–150 (IAHPDFMKAYSIADVDGDGELSPKEFYNGPYVFEMD) form the EF-hand domain. Positions 128, 130, 132, 134, and 139 each coordinate Ca(2+).

As to expression, component of the acid-soluble organic matrix of calcified layers of the shell (at protein level).

The protein localises to the secreted. In Lottia gigantea (Giant owl limpet), this protein is EF-hand calcium-binding domain-containing protein 1.